A 281-amino-acid polypeptide reads, in one-letter code: N-acetylmuramic acid 6-phosphate etherase (281 aa).

The SIS domain maps to 63-226 (IVPRMKQGGR…TTSVMIQLGR (164 aa)). Glutamate 91 functions as the Proton donor in the catalytic mechanism. Glutamate 122 is a catalytic residue.

It belongs to the GCKR-like family. MurNAc-6-P etherase subfamily. Homodimer.

The catalysed reaction is N-acetyl-D-muramate 6-phosphate + H2O = N-acetyl-D-glucosamine 6-phosphate + (R)-lactate. It functions in the pathway amino-sugar metabolism; N-acetylmuramate degradation. Functionally, specifically catalyzes the cleavage of the D-lactyl ether substituent of MurNAc 6-phosphate, producing GlcNAc 6-phosphate and D-lactate. This is N-acetylmuramic acid 6-phosphate etherase from Bacteroides fragilis (strain YCH46).